A 441-amino-acid chain; its full sequence is Glutamate--tRNA ligase 2 (441 aa).

The 'HIGH' region motif lies at 6–16; it reads PSPTGDMHIGN. The short motif at 231–235 is the 'KMSKS' region element; the sequence is KMSKR. Residue K234 participates in ATP binding.

The protein belongs to the class-I aminoacyl-tRNA synthetase family. Glutamate--tRNA ligase type 1 subfamily. As to quaternary structure, monomer.

The protein localises to the cytoplasm. The catalysed reaction is tRNA(Glu) + L-glutamate + ATP = L-glutamyl-tRNA(Glu) + AMP + diphosphate. In terms of biological role, catalyzes the attachment of glutamate to tRNA(Glu) in a two-step reaction: glutamate is first activated by ATP to form Glu-AMP and then transferred to the acceptor end of tRNA(Glu). This is Glutamate--tRNA ligase 2 from Helicobacter hepaticus (strain ATCC 51449 / 3B1).